The chain runs to 347 residues: Phosphoribosylformylglycinamidine cyclo-ligase (347 aa).

It belongs to the AIR synthase family.

The protein localises to the cytoplasm. The enzyme catalyses 2-formamido-N(1)-(5-O-phospho-beta-D-ribosyl)acetamidine + ATP = 5-amino-1-(5-phospho-beta-D-ribosyl)imidazole + ADP + phosphate + H(+). It functions in the pathway purine metabolism; IMP biosynthesis via de novo pathway; 5-amino-1-(5-phospho-D-ribosyl)imidazole from N(2)-formyl-N(1)-(5-phospho-D-ribosyl)glycinamide: step 2/2. This is Phosphoribosylformylglycinamidine cyclo-ligase from Prochlorococcus marinus (strain MIT 9301).